We begin with the raw amino-acid sequence, 502 residues long: TNF receptor-associated factor family protein DDB_G0268444 (502 aa).

The RING-type; degenerate zinc finger occupies 28-68 (CSICYESVYKKEIYQCKEIHWFCKTCWAESLFKKKECMICR). 2 TRAF-type zinc fingers span residues 129-183 (KHLK…SRSL) and 185-243 (NHYK…PKSN). Positions 261–295 (IESQSLQIKETNIKYENLLNKINKLEQLETESKCD) form a coiled coil. Residues 368 to 489 (KYKNRWSISN…DDSLVIDFSI (122 aa)) enclose the MATH domain.

The protein belongs to the TNF receptor-associated factor family. A subfamily.

It localises to the cytoplasm. In terms of biological role, probable adapter protein and signal transducer that links members of the tumor necrosis factor receptor family to different signaling pathways by association with the receptor cytoplasmic domain and kinases. The protein is TNF receptor-associated factor family protein DDB_G0268444 of Dictyostelium discoideum (Social amoeba).